Consider the following 342-residue polypeptide: RNA 3'-terminal phosphate cyclase (342 aa).

Residues glutamine 103 and 283 to 287 (YLADQ) contribute to the ATP site. Histidine 308 functions as the Tele-AMP-histidine intermediate in the catalytic mechanism.

Belongs to the RNA 3'-terminal cyclase family. Type 1 subfamily.

The protein resides in the cytoplasm. It catalyses the reaction a 3'-end 3'-phospho-ribonucleotide-RNA + ATP = a 3'-end 2',3'-cyclophospho-ribonucleotide-RNA + AMP + diphosphate. Catalyzes the conversion of 3'-phosphate to a 2',3'-cyclic phosphodiester at the end of RNA. The mechanism of action of the enzyme occurs in 3 steps: (A) adenylation of the enzyme by ATP; (B) transfer of adenylate to an RNA-N3'P to produce RNA-N3'PP5'A; (C) and attack of the adjacent 2'-hydroxyl on the 3'-phosphorus in the diester linkage to produce the cyclic end product. The biological role of this enzyme is unknown but it is likely to function in some aspects of cellular RNA processing. The sequence is that of RNA 3'-terminal phosphate cyclase (rtcA) from Escherichia coli O157:H7.